A 181-amino-acid polypeptide reads, in one-letter code: MMTPENDEEQTSVFSATVYGDKIQGKNKRKRVIGLCIRISMVISLLSMITMSAFLIVRLNQCMSANKAAITDSAVAVAAASSTHRKVVSSTTQYDHKESCNGLYYQGSCYILHSDYKSFEDAKANCAAESSTLPNKSDVLTTWLIDYVEDTWGSDGNPITKTTSDYQDSDVSQEVRKYFCT.

The Intravirion portion of the chain corresponds to 1-34; that stretch reads MMTPENDEEQTSVFSATVYGDKIQGKNKRKRVIG. Residues 35–57 form a helical membrane-spanning segment; the sequence is LCIRISMVISLLSMITMSAFLIV. The Virion surface segment spans residues 58–181; sequence RLNQCMSANK…SQEVRKYFCT (124 aa). N-linked (GlcNAc...) asparagine; by host glycosylation occurs at Asn135.

It belongs to the orthopoxvirus OPG161 family. Homodimer, disulfide-linked. Interacts with protein OPG190. Interacts (via C-terminus) with protein OPG164. Interacts with OPG162.

Its subcellular location is the virion membrane. It is found in the host membrane. Its function is as follows. Forms a complex with OPG162 and OPG190 to coordinate the incorporation of OPG164 into wrapped enveloped virion (EV) membranes and, subsequently, the production of actin tails. Therefore plays an essential role in efficient cell-to-cell spread of viral particles. The polypeptide is Protein OPG161 (OPG161) (Monkeypox virus).